A 284-amino-acid chain; its full sequence is 2-dehydro-3-deoxyphosphooctonate aldolase (284 aa).

The protein belongs to the KdsA family.

The protein resides in the cytoplasm. The catalysed reaction is D-arabinose 5-phosphate + phosphoenolpyruvate + H2O = 3-deoxy-alpha-D-manno-2-octulosonate-8-phosphate + phosphate. It participates in carbohydrate biosynthesis; 3-deoxy-D-manno-octulosonate biosynthesis; 3-deoxy-D-manno-octulosonate from D-ribulose 5-phosphate: step 2/3. The protein operates within bacterial outer membrane biogenesis; lipopolysaccharide biosynthesis. The protein is 2-dehydro-3-deoxyphosphooctonate aldolase of Photobacterium profundum (strain SS9).